The following is a 376-amino-acid chain: D-alanine--D-alanine ligase B (376 aa).

In terms of domain architecture, ATP-grasp spans 155 to 361 (KRLMRDAGLP…QTDLMDKLIA (207 aa)). An ATP-binding site is contributed by 184-239 (AALGTPDLFVKPANLGSSVGVSRARSEEEFAASCALAFRYDRKILVEQALNGAREI). Residues D316, E328, and N330 each contribute to the Mg(2+) site.

This sequence belongs to the D-alanine--D-alanine ligase family. The cofactor is Mg(2+). Mn(2+) is required as a cofactor.

Its subcellular location is the cytoplasm. It carries out the reaction 2 D-alanine + ATP = D-alanyl-D-alanine + ADP + phosphate + H(+). It participates in cell wall biogenesis; peptidoglycan biosynthesis. Cell wall formation. This is D-alanine--D-alanine ligase B from Bradyrhizobium diazoefficiens (strain JCM 10833 / BCRC 13528 / IAM 13628 / NBRC 14792 / USDA 110).